Reading from the N-terminus, the 163-residue chain is Gas vesicle protein H2 (163 aa).

The disordered stretch occupies residues 57 to 92 (LGSDARSPSTPAGNADDAGDAETAHIETRASDDSDD). The segment covering 78-88 (ETAHIETRASD) has biased composition (basic and acidic residues).

It belongs to the gas vesicle GvpH family. GvpF to GvpM interact with each other in vitro, and may form multi-subunit complex(es). Interacts with GvpC. Might interact with GvpA.

The protein resides in the gas vesicle. Its subcellular location is the cytoplasm. Functionally, a minor component of the gas vesicle, also found in soluble extracts. Proteins GvpF to GvpM might be involved in nucleating gas vesicle formation. Gas vesicles are hollow, gas filled proteinaceous nanostructures found in several microbial planktonic microorganisms. They allow positioning of halobacteria at the optimal depth for growth in the poorly aerated, shallow brine pools of their habitat. In terms of biological role, expression of 2 c-vac DNA fragments containing 2 divergently transcribed regions (gvpE-gvpF-gvpG-gvpH-gvpI-gvpJ-gvpK-gvpL-gvpM and gvpA-gvpC-gvpN-gvpO) allows H.volcanii to produce gas vesicles. The sequence is that of Gas vesicle protein H2 from Halobacterium salinarum (strain ATCC 700922 / JCM 11081 / NRC-1) (Halobacterium halobium).